The following is a 774-amino-acid chain: C6 finger domain transcription factor nscR (774 aa).

Residues 17-43 (CELCRERKIKCDKVDPCNNCVSAGVVC) constitute a DNA-binding region (zn(2)-C6 fungal-type). Disordered regions lie at residues 61 to 94 (RPMSPTFVPPRAPTPVAGPVPSEKKQTDHSSGAV), 536 to 559 (LQLPQPSNGSSQPPSSPSPRPQEH), and 665 to 697 (PTFSLGSSTGTSAAPTPRSRASSTPSDTLSDLS). Over residues 67–78 (FVPPRAPTPVAG) the composition is skewed to pro residues. Residues 536 to 548 (LQLPQPSNGSSQP) show a composition bias toward low complexity. A compositionally biased stretch (polar residues) spans 665–674 (PTFSLGSSTG). Low complexity predominate over residues 675–697 (TSAAPTPRSRASSTPSDTLSDLS).

The protein resides in the nucleus. Its function is as follows. Transcription factor that specifically regulates the neosartoricin biosynthesis gene cluster. The protein is C6 finger domain transcription factor nscR of Aspergillus fumigatus (strain ATCC MYA-4609 / CBS 101355 / FGSC A1100 / Af293) (Neosartorya fumigata).